Consider the following 354-residue polypeptide: Arginase-2, mitochondrial (354 aa).

A mitochondrion-targeting transit peptide spans 1 to 22 (MFLRSSVSRLLHGQIPCALTRS). Histidine 120, aspartate 143, histidine 145, and aspartate 147 together coordinate Mn(2+). Substrate contacts are provided by residues 145–149 (HADIN), 156–158 (SGN), and glutamate 202. The Mn(2+) site is built by aspartate 251 and aspartate 253. Positions 265 and 296 each coordinate substrate.

This sequence belongs to the arginase family. Homotrimer. The cofactor is Mn(2+).

The protein resides in the mitochondrion. It carries out the reaction L-arginine + H2O = urea + L-ornithine. It participates in nitrogen metabolism; urea cycle; L-ornithine and urea from L-arginine: step 1/1. Functionally, may play a role in the regulation of extra-urea cycle arginine metabolism and also in down-regulation of nitric oxide synthesis. Extrahepatic arginase functions to regulate L-arginine bioavailability to nitric oxid synthase (NOS). Arginine metabolism is a critical regulator of innate and adaptive immune responses. Seems to be involved in negative regulation of the survival capacity of activated T cells. May suppress inflammation-related signaling in asthmatic airway epithelium. May play a role in promoting prenatal immune suppression. Regulates RPS6KB1 signaling, which promotes endothelial cell senescence and inflammation and implicates NOS3/eNOS dysfunction. Can inhibit endothelial autophagy independently of its enzymatic activity implicating mTORC2 signaling. Involved in vascular smooth muscle cell senescence and apoptosis independently of its enzymatic activity. The polypeptide is Arginase-2, mitochondrial (Arg2) (Rattus norvegicus (Rat)).